A 942-amino-acid chain; its full sequence is DDB1- and CUL4-associated factor 5 (942 aa).

WD repeat units lie at residues 51–91, 99–139, 140–180, 185–225, 277–317, and 331–370; these read GHFG…HSRV, EHHS…LDVF, AHED…HGEP, NYPS…SSLL, FNSC…EAGG, and GHRS…GCTG. Disordered stretches follow at residues 449–478 and 490–509; these read GVSE…ESAD and TTNT…AASR. The span at 454–465 shows a compositional bias: polar residues; the sequence is SGYTDSESSASL. Threonine 500 is modified (phosphothreonine). A phosphoserine mark is found at serine 531, serine 533, serine 626, serine 628, serine 645, serine 648, and serine 651. Disordered regions lie at residues 544–655, 676–824, and 889–942; these read TDLF…DIES, NNKD…EERS, and ACET…KLKT. Over residues 625 to 641 the composition is skewed to low complexity; sequence LSSSPTSSPERSTSTLE. Basic and acidic residues-rich tracts occupy residues 690-701 and 728-738; these read DEGRAGTSHKDN and CSKDTFKEETP. Polar residues predominate over residues 760–770; it reads GTSQDTGNSGS. Serine 794 carries the post-translational modification Phosphoserine. Residues 801–815 show a composition bias toward polar residues; sequence SGSTLNSGSGNCPRT.

Interacts with DDB1, CUL4A or CUL4B. Interacts with L3MBTL3. Interacts with DNMT1. Interacts with E2F1. Interacts with SOX2. In terms of tissue distribution, ubiquitous.

It participates in protein modification; protein ubiquitination. Its function is as follows. Is a substrate receptor for the CUL4-DDB1 E3 ubiquitin-protein ligase complex (CRL4). The complex CRL4-DCAF5 is involved in the ubiquitination of a set of methylated non-histone proteins, including SOX2, DNMT1 and E2F1. The polypeptide is DDB1- and CUL4-associated factor 5 (DCAF5) (Homo sapiens (Human)).